The primary structure comprises 175 residues: Shikimate kinase (175 aa).

14–19 serves as a coordination point for ATP; the sequence is GAGKST. S18 serves as a coordination point for Mg(2+). The substrate site is built by D36, R60, and G82. Residue R120 coordinates ATP. Residue R140 participates in substrate binding. ATP is bound at residue Q157.

This sequence belongs to the shikimate kinase family. Monomer. The cofactor is Mg(2+).

The protein resides in the cytoplasm. It carries out the reaction shikimate + ATP = 3-phosphoshikimate + ADP + H(+). Its pathway is metabolic intermediate biosynthesis; chorismate biosynthesis; chorismate from D-erythrose 4-phosphate and phosphoenolpyruvate: step 5/7. Functionally, catalyzes the specific phosphorylation of the 3-hydroxyl group of shikimic acid using ATP as a cosubstrate. The polypeptide is Shikimate kinase (Actinobacillus succinogenes (strain ATCC 55618 / DSM 22257 / CCUG 43843 / 130Z)).